The sequence spans 296 residues: Tuberculosinyl adenosine transferase (296 aa).

This sequence belongs to the diterpene synthase family. Homodimer. The cofactor is Mg(2+).

It carries out the reaction tuberculosinyl diphosphate + adenosine + H(+) = 1-tuberculosinyladenosine + diphosphate. It catalyses the reaction tuberculosinyl diphosphate + H2O = tuberculosinol + diphosphate. The catalysed reaction is tuberculosinyl diphosphate + H2O = (13R)-edaxadiene + diphosphate. The enzyme catalyses tuberculosinyl diphosphate + H2O = (13S)-edaxadiene + diphosphate. Its function is as follows. Tuberculosinyl transferase that catalyzes the condensation of adenosine and tuberculosinyl diphosphate (TbPP) to generate 1-tuberculosinyladenosine (1-TbAd), which acts as an antiacid that directly protects M.tuberculosis from acid pH and physically remodels M.tuberculosis phagolysosomes. In addition, acts as a phosphatase that catalyzes the diphosphate-removal from TbPP to produce both tuberculosinol (TOH) and isotuberculosinol (iso-TOH). In Mycobacterium tuberculosis (strain CDC 1551 / Oshkosh), this protein is Tuberculosinyl adenosine transferase.